The sequence spans 901 residues: Protein translocase subunit SecA (901 aa).

ATP-binding positions include glutamine 85, glycine 103–threonine 107, and aspartate 510. The segment at arginine 848–glutamine 901 is disordered. Residues isoleucine 849–serine 866 show a composition bias toward polar residues. Zn(2+) contacts are provided by cysteine 882, cysteine 884, cysteine 893, and histidine 894. The span at lysine 888–glutamine 901 shows a compositional bias: basic residues.

This sequence belongs to the SecA family. Monomer and homodimer. Part of the essential Sec protein translocation apparatus which comprises SecA, SecYEG and auxiliary proteins SecDF-YajC and YidC. Forms a complex with SecB. Zn(2+) serves as cofactor.

It is found in the cell inner membrane. Its subcellular location is the cytoplasm. The catalysed reaction is ATP + H2O + cellular proteinSide 1 = ADP + phosphate + cellular proteinSide 2.. Its function is as follows. Part of the Sec protein translocase complex. Interacts with the SecYEG preprotein conducting channel. Has a central role in coupling the hydrolysis of ATP to the transfer of proteins into and across the cell membrane, serving both as a receptor for the preprotein-SecB complex and as an ATP-driven molecular motor driving the stepwise translocation of polypeptide chains across the membrane. The polypeptide is Protein translocase subunit SecA (Haemophilus influenzae (strain ATCC 51907 / DSM 11121 / KW20 / Rd)).